Consider the following 425-residue polypeptide: Protein CLP1 homolog (425 aa).

ATP-binding positions include Glu18, Lys59, and Asp121–Thr126.

It belongs to the Clp1 family. Clp1 subfamily.

Its subcellular location is the nucleus. Its function is as follows. Required for endonucleolytic cleavage during polyadenylation-dependent pre-mRNA 3'-end formation. The sequence is that of Protein CLP1 homolog (cbc) from Drosophila pseudoobscura pseudoobscura (Fruit fly).